We begin with the raw amino-acid sequence, 335 residues long: Autophagy-related protein 21 (335 aa).

2 WD repeats span residues 165-205 (CHSS…LVTE) and 210-249 (YIPA…SDPN).

It belongs to the WD repeat PROPPIN family.

The protein localises to the cytoplasm. It is found in the golgi apparatus. It localises to the golgi stack membrane. Its subcellular location is the vacuole membrane. The protein resides in the preautophagosomal structure membrane. In terms of biological role, required for cytoplasm to vacuole transport (Cvt) vesicles formation and autophagy. Has a role in sporulation. This is Autophagy-related protein 21 (mug179) from Schizosaccharomyces pombe (strain 972 / ATCC 24843) (Fission yeast).